A 359-amino-acid chain; its full sequence is 3-dehydroquinate synthase (359 aa).

NAD(+) is bound by residues Asp-71–Lys-76, Gly-105–Asp-109, Thr-129–Thr-130, Lys-142, and Lys-151. The Zn(2+) site is built by Glu-184, His-247, and His-264.

This sequence belongs to the sugar phosphate cyclases superfamily. Dehydroquinate synthase family. Requires NAD(+) as cofactor. Co(2+) is required as a cofactor. The cofactor is Zn(2+).

It is found in the cytoplasm. The catalysed reaction is 7-phospho-2-dehydro-3-deoxy-D-arabino-heptonate = 3-dehydroquinate + phosphate. It functions in the pathway metabolic intermediate biosynthesis; chorismate biosynthesis; chorismate from D-erythrose 4-phosphate and phosphoenolpyruvate: step 2/7. Functionally, catalyzes the conversion of 3-deoxy-D-arabino-heptulosonate 7-phosphate (DAHP) to dehydroquinate (DHQ). This chain is 3-dehydroquinate synthase, found in Chromobacterium violaceum (strain ATCC 12472 / DSM 30191 / JCM 1249 / CCUG 213 / NBRC 12614 / NCIMB 9131 / NCTC 9757 / MK).